A 228-amino-acid chain; its full sequence is Ribosomal RNA small subunit methyltransferase G (228 aa).

Residues Gly-70, 121–122, and Arg-138 each bind S-adenosyl-L-methionine; that span reads AE.

This sequence belongs to the methyltransferase superfamily. RNA methyltransferase RsmG family.

It is found in the cytoplasm. In terms of biological role, specifically methylates the N7 position of a guanine in 16S rRNA. The chain is Ribosomal RNA small subunit methyltransferase G from Thermotoga petrophila (strain ATCC BAA-488 / DSM 13995 / JCM 10881 / RKU-1).